We begin with the raw amino-acid sequence, 668 residues long: UvrABC system protein B (668 aa).

The 386-residue stretch at 31-416 folds into the Helicase ATP-binding domain; the sequence is QGITDGVPAQ…RGHIIEQIIR (386 aa). ATP is bound at residue 44–51; it reads GTTGSGKT. The Beta-hairpin signature appears at 97 to 120; sequence YYDYYQPEAYIARSDTYIEKSLLI. The Helicase C-terminal domain occupies 433–596; that stretch reads QIDDLLEEIR…ITPQPIIKPI (164 aa). The UVR domain occupies 621–656; the sequence is EASIKTYEEAMYQAAQEFQFDEAAKYRDLMNAAKKQ.

This sequence belongs to the UvrB family. As to quaternary structure, forms a heterotetramer with UvrA during the search for lesions. Interacts with UvrC in an incision complex.

Its subcellular location is the cytoplasm. Functionally, the UvrABC repair system catalyzes the recognition and processing of DNA lesions. A damage recognition complex composed of 2 UvrA and 2 UvrB subunits scans DNA for abnormalities. Upon binding of the UvrA(2)B(2) complex to a putative damaged site, the DNA wraps around one UvrB monomer. DNA wrap is dependent on ATP binding by UvrB and probably causes local melting of the DNA helix, facilitating insertion of UvrB beta-hairpin between the DNA strands. Then UvrB probes one DNA strand for the presence of a lesion. If a lesion is found the UvrA subunits dissociate and the UvrB-DNA preincision complex is formed. This complex is subsequently bound by UvrC and the second UvrB is released. If no lesion is found, the DNA wraps around the other UvrB subunit that will check the other stand for damage. This Chlamydia trachomatis serovar D (strain ATCC VR-885 / DSM 19411 / UW-3/Cx) protein is UvrABC system protein B.